The chain runs to 94 residues: Large ribosomal subunit protein bL27 (94 aa).

The propeptide occupies 1–9; it reads MLKLNLQFF.

The protein belongs to the bacterial ribosomal protein bL27 family. The N-terminus is cleaved by ribosomal processing cysteine protease Prp.

The polypeptide is Large ribosomal subunit protein bL27 (Staphylococcus aureus (strain Mu3 / ATCC 700698)).